The chain runs to 164 residues: Nitric oxide synthase, inducible (164 aa).

F3 provides a ligand contact to (6R)-L-erythro-5,6,7,8-tetrahydrobiopterin. Residue Y18 participates in heme b binding. Positions F42–K62 are calmodulin-binding. In terms of domain architecture, Flavodoxin-like spans C66 to F164. Residues T72, E73, T74, K76, S77, S118, T119, S155, and C162 each coordinate FMN.

Belongs to the NOS family. Homodimer. Requires heme b as cofactor. It depends on FAD as a cofactor. The cofactor is FMN. (6R)-L-erythro-5,6,7,8-tetrahydrobiopterin serves as cofactor.

It localises to the cytoplasm. Its subcellular location is the cytosol. The catalysed reaction is 2 L-arginine + 3 NADPH + 4 O2 + H(+) = 2 L-citrulline + 2 nitric oxide + 3 NADP(+) + 4 H2O. With respect to regulation, not stimulated by calcium/calmodulin. In terms of biological role, produces nitric oxide (NO) which is a messenger molecule with diverse functions throughout the body. In macrophages, NO mediates tumoricidal and bactericidal actions. Also has nitrosylase activity and mediates cysteine S-nitrosylation of cytoplasmic target proteins such COX2. The polypeptide is Nitric oxide synthase, inducible (nos2) (Carassius auratus (Goldfish)).